Reading from the N-terminus, the 492-residue chain is Ammonium transporter MEP1 (492 aa).

The Extracellular portion of the chain corresponds to 1–18; it reads MESRTTGPLTTETYDGPT. Residues 19–39 traverse the membrane as a helical segment; it reads VAFMILGAALVFFMVPGLGFL. Over 40 to 49 the chain is Cytoplasmic; it reads YSGLARRKSA. Residues 50-70 traverse the membrane as a helical segment; that stretch reads LALIWVVLMATLVGILQWYFW. At 71 to 109 the chain is on the extracellular side; the sequence is GYSLAFSKSAPNNKFIGNLDSFGFRNVYGKKFDEDAYPE. The chain crosses the membrane as a helical span at residues 110–130; that stretch reads LAYATFQMMFSCVNLSIIAGA. Residues 131–140 lie on the Cytoplasmic side of the membrane; that stretch reads TAERGRLLPH. A helical membrane pass occupies residues 141 to 161; it reads MVFLFILATIGYCPVTYWIWS. The Extracellular segment spans residues 162-174; the sequence is PGGWAYQWGVLDW. The helical transmembrane segment at 175 to 195 threads the bilayer; that stretch reads AGGGNIEILSAVSGFVYSWFL. Residues 196-210 are Cytoplasmic-facing; sequence GKRNEKLLINFRPHN. The helical transmembrane segment at 211-231 threads the bilayer; the sequence is VSLVTLGTSILWFGWLLFNSA. Topologically, residues 232–240 are extracellular; the sequence is SSLSPNLRS. Residues 241–261 traverse the membrane as a helical segment; it reads VYAFMNTCLSAITGGMTWCLL. The Cytoplasmic segment spans residues 262–268; sequence DYRSEKK. Residues 269–289 form a helical membrane-spanning segment; the sequence is WSTVGLCSGIISGLVAATPSS. Residue glycine 290 is a topological domain, extracellular. The chain crosses the membrane as a helical span at residues 291-311; that stretch reads CITLYGSLIQGIVAGVVCNFA. The Cytoplasmic segment spans residues 312–331; that stretch reads TKLKYYAKVDDAMDILAEHG. The helical transmembrane segment at 332-352 threads the bilayer; it reads VAGVIGLIFNALFGADWVIGM. At 353 to 373 the chain is on the extracellular side; it reads DGTTEHEGGWVTHNYKQMYKQ. Residues 374-394 traverse the membrane as a helical segment; the sequence is IAYIAASIGYTAAVTAIICFV. Topologically, residues 395 to 492 are cytoplasmic; that stretch reads LGYIPGMRLR…PIHQEDPANR (98 aa). 2 positions are modified to phosphoserine: serine 442 and serine 445. Positions 455–492 are disordered; it reads HLAAERSSSGTNSSSDGNGEMIQSEKILPIHQEDPANR. Residues 461-473 are compositionally biased toward low complexity; sequence SSSGTNSSSDGNG.

The protein belongs to the ammonia transporter channel (TC 1.A.11.2) family.

It is found in the membrane. Its function is as follows. Transporter for ammonium (both charged and uncharged NH3 and NH4) to use as a nitrogen source. Can also transport methylamine. The affinity of MEP1 is about twenty times lower than that of MEP2. MEP3 has the lowest affinity. This Saccharomyces cerevisiae (strain ATCC 204508 / S288c) (Baker's yeast) protein is Ammonium transporter MEP1 (MEP1).